Consider the following 260-residue polypeptide: Granzyme A (260 aa).

An N-terminal signal peptide occupies residues 1-26 (MRNASGPRGPSLATLLFLLLIPEGGC). The propeptide at 27–28 (ER) is activation peptide. One can recognise a Peptidase S1 domain in the interval 29–257 (IIGGDTVVPH…HLNWIKKIMK (229 aa)). The cysteines at positions 54 and 70 are disulfide-linked. Residues His-69 and Asp-113 each act as charge relay system in the active site. Intrachain disulfides connect Cys-147–Cys-217, Cys-178–Cys-196, and Cys-207–Cys-232. N-linked (GlcNAc...) asparagine glycans are attached at residues Asn-157 and Asn-169. The Charge relay system role is filled by Ser-211.

Belongs to the peptidase S1 family. Granzyme subfamily. In terms of assembly, homodimer; disulfide-linked. Interacts with APEX1. As to expression, found in cytotoxic lymphocytes and in normal lymphoid tissues such as thymus and spleen. More abundant in lymphoid tissues than isoform HF2.

Its subcellular location is the secreted. It is found in the cytoplasmic granule. It catalyses the reaction Hydrolysis of proteins, including fibronectin, type IV collagen and nucleolin. Preferential cleavage: -Arg-|-Xaa-, -Lys-|-Xaa- &gt;&gt; -Phe-|-Xaa- in small molecule substrates.. Functionally, abundant protease in the cytosolic granules of cytotoxic T-cells and NK-cells which activates caspase-independent pyroptosis when delivered into the target cell through the immunological synapse. It cleaves after Lys or Arg. Cleaves APEX1 after 'Lys-31' and destroys its oxidative repair activity. Cleaves the nucleosome assembly protein SET after 'Lys-189', which disrupts its nucleosome assembly activity and allows the SET complex to translocate into the nucleus to nick and degrade the DNA. The protein is Granzyme A (Gzma) of Mus musculus (Mouse).